The primary structure comprises 1556 residues: MFAEGQIQKVPILGKESIHIGYKMQDHIVSEIVANIKSSTYILVTDTNIEDLGYVESLKTKFEAAFAKDGIKSRLLTYTVAPGETSKSRATKAAIEDWMLSKGCTRDTVILAVGGGVIGDMIGYVAATFMRGVRFVQIPTTLLAMVDSSIGGKTAIDTPLGKNLVGAFWQPVNIFIDTSFLETLPVREFINGMAEVIKTAAFYDAEEFTRLESASEIFLSTIKKRDAKDPRRVDLSPITDTIGRIVLGSARIKAAVVSADEREGGLRNLLNFGHSIGHAYEAILTPYILHGECVAIGMVKEAELSRYLGILSPVAVARLAKCIKAYELPVSLDDATVKARSHGKKCPVDDLLRIMGVDKKNDGSTKKIVILSAIGKTHEQKASSVADKDIRFVLSEEVIVGEAPVGDKKSYTVTPPGSKSISNRAFVLTALGKGPCKLRNLLHSDDTQHMLEAIELLGGASFEWEADGETLLVTGNGGKLTAPAQELYLGNAGTASRFLTTAATLVQKGDKDHVILTGNKRMQERPIGPLVDALRSNGADIAFQNAEGSLPLKIEAGVGLKGGLIEVAATVSSQYVSSLLMCAPYAQTPVTLSLVGGKPISQFYIDMTIAMMADFGVVVTKDETKEHTYHIPQGVYTNPEEYVVESDASSATYPLAYAAMTGHTVTVPNIGSKSLQGDARFAIDVLKAMGCTVEQTATSTTVTGVPNLKAIAVDMEPMTDAFLTACVVAAVSEGTTVITGIANQRVKECNRIEAMRVQLAKYGVVCRELEDGIEVDGISRSDLKTPVSVHSYDDHRVAMSFSLLSSIMAAPVAIEERRCVEKTWPGWWDVLSGVFNVPLEGVTLAKTVSKAESGLSKPSIFIVGMRGAGKTHLGAQAANHLGYEFIDLDQLLEKDLDTTIPQLIADKGWDHFRAEELRLLKQCLNDKSEGYVISCGGGVVETPAARDALQTFKGVGGIVLHVHRPVSRILEYLNKDQSRPAFVDDLEAVWQRRKELYRSVSSNVFFAPHCDSAEATAKVQQMLGAFLDRVTGKSEFVIPHKDQFTSFLSLTFPDVSIAATMLPSLSEGCSALELRVDLLNENDEAIPSEEYVLSQLAILRQNVDLPILYTVRTKAQGGRFPDDKPVELANLVNLGLKTAVELLDVELTYPAELVSSVGASRGYTKLLGSHHDFPGALNWSSLEWENMYARAEAVPVDVVKLVGMAKSFSDNFALENFREAHTSSPLLAINMGSHGQLSRVTNTLLTPVTHADLPVAAAPGQLSVEEINQTRSTIGMFNKNLSFFIVGTPIGHSKSPILHNTMFKKLGLPYEYSRFKTDDAAAVNAKARALLAQGNLGGISVTIPLKQDIIPFLDEVSPLAQQIGAVNTIIPGPNGTLKGDNTDILGLVNALTRFGANSLDKKTALIVGAGGTSLAAVHGLRSLGFAKILIANRTLSKAEAIADKFDNVEAVTLDSFVANKYTPSVIVSCVPATTFSMLDESNKLVSAALAASPKGLVLEAAYSAEATPLLKQVMDVEGWEFISGLYMLTEQGFEQFRLWTGIPAPKEVGEKAVLGN.

The segment at 1–387 (MFAEGQIQKV…HEQKASSVAD (387 aa)) is 3-dehydroquinate synthase. NAD(+) is bound by residues 46–48 (DTN), 84–87 (ETSK), 115–117 (GGV), and Asp-120. Residue Arg-131 participates in 7-phospho-2-dehydro-3-deoxy-D-arabino-heptonate binding. Position 140 to 141 (140 to 141 (TT)) interacts with NAD(+). Residues Asp-147 and Lys-153 each contribute to the 7-phospho-2-dehydro-3-deoxy-D-arabino-heptonate site. Lys-162 contacts NAD(+). Asn-163 provides a ligand contact to 7-phospho-2-dehydro-3-deoxy-D-arabino-heptonate. NAD(+) is bound by residues 180-183 (FLET) and Asn-191. A Zn(2+)-binding site is contributed by Glu-195. Residues 195-198 (EVIK) and Lys-253 contribute to the 7-phospho-2-dehydro-3-deoxy-D-arabino-heptonate site. The Proton acceptor; for 3-dehydroquinate synthase activity role is filled by Glu-263. 7-phospho-2-dehydro-3-deoxy-D-arabino-heptonate contacts are provided by residues 267-271 (RNLLN) and His-274. His-274 contributes to the Zn(2+) binding site. His-278 serves as the catalytic Proton acceptor; for 3-dehydroquinate synthase activity. 7-phospho-2-dehydro-3-deoxy-D-arabino-heptonate-binding residues include His-290 and Lys-359. Zn(2+) is bound at residue His-290. The tract at residues 400–837 (VGEAPVGDKK…WDVLSGVFNV (438 aa)) is EPSP synthase. Cys-819 (for EPSP synthase activity) is an active-site residue. Positions 858–1049 (PSIFIVGMRG…HKDQFTSFLS (192 aa)) are shikimate kinase. ATP is bound at residue 864-871 (GMRGAGKT). Residues 1050-1266 (LTFPDVSIAA…AAPGQLSVEE (217 aa)) are 3-dehydroquinase. Residue His-1171 is the Proton acceptor; for 3-dehydroquinate dehydratase activity of the active site. Lys-1200 functions as the Schiff-base intermediate with substrate; for 3-dehydroquinate dehydratase activity in the catalytic mechanism. The shikimate dehydrogenase stretch occupies residues 1279–1556 (KNLSFFIVGT…EVGEKAVLGN (278 aa)).

In the N-terminal section; belongs to the sugar phosphate cyclases superfamily. Dehydroquinate synthase family. This sequence in the 2nd section; belongs to the EPSP synthase family. The protein in the 3rd section; belongs to the shikimate kinase family. It in the 4th section; belongs to the type-I 3-dehydroquinase family. In the C-terminal section; belongs to the shikimate dehydrogenase family. Homodimer. Zn(2+) serves as cofactor.

It is found in the cytoplasm. The enzyme catalyses 7-phospho-2-dehydro-3-deoxy-D-arabino-heptonate = 3-dehydroquinate + phosphate. It catalyses the reaction 3-dehydroquinate = 3-dehydroshikimate + H2O. It carries out the reaction shikimate + NADP(+) = 3-dehydroshikimate + NADPH + H(+). The catalysed reaction is shikimate + ATP = 3-phosphoshikimate + ADP + H(+). The enzyme catalyses 3-phosphoshikimate + phosphoenolpyruvate = 5-O-(1-carboxyvinyl)-3-phosphoshikimate + phosphate. Its pathway is metabolic intermediate biosynthesis; chorismate biosynthesis; chorismate from D-erythrose 4-phosphate and phosphoenolpyruvate: step 2/7. It functions in the pathway metabolic intermediate biosynthesis; chorismate biosynthesis; chorismate from D-erythrose 4-phosphate and phosphoenolpyruvate: step 3/7. The protein operates within metabolic intermediate biosynthesis; chorismate biosynthesis; chorismate from D-erythrose 4-phosphate and phosphoenolpyruvate: step 4/7. It participates in metabolic intermediate biosynthesis; chorismate biosynthesis; chorismate from D-erythrose 4-phosphate and phosphoenolpyruvate: step 5/7. Its pathway is metabolic intermediate biosynthesis; chorismate biosynthesis; chorismate from D-erythrose 4-phosphate and phosphoenolpyruvate: step 6/7. In terms of biological role, the AROM polypeptide catalyzes 5 consecutive enzymatic reactions in prechorismate polyaromatic amino acid biosynthesis. The polypeptide is Pentafunctional AROM polypeptide (Yarrowia lipolytica (strain CLIB 122 / E 150) (Yeast)).